The chain runs to 133 residues: S-adenosylmethionine decarboxylase proenzyme (133 aa).

The active-site Schiff-base intermediate with substrate; via pyruvic acid is serine 64. Position 64 is a pyruvic acid (Ser); by autocatalysis (serine 64). The active-site Proton acceptor; for processing activity is histidine 69. The Proton donor; for catalytic activity role is filled by cysteine 84.

Belongs to the prokaryotic AdoMetDC family. Type 1 subfamily. Heterotetramer of two alpha and two beta chains arranged as a dimer of alpha/beta heterodimers. The cofactor is pyruvate. Post-translationally, is synthesized initially as an inactive proenzyme. Formation of the active enzyme involves a self-maturation process in which the active site pyruvoyl group is generated from an internal serine residue via an autocatalytic post-translational modification. Two non-identical subunits are generated from the proenzyme in this reaction, and the pyruvate is formed at the N-terminus of the alpha chain, which is derived from the carboxyl end of the proenzyme. The post-translation cleavage follows an unusual pathway, termed non-hydrolytic serinolysis, in which the side chain hydroxyl group of the serine supplies its oxygen atom to form the C-terminus of the beta chain, while the remainder of the serine residue undergoes an oxidative deamination to produce ammonia and the pyruvoyl group blocking the N-terminus of the alpha chain.

The catalysed reaction is S-adenosyl-L-methionine + H(+) = S-adenosyl 3-(methylsulfanyl)propylamine + CO2. It participates in amine and polyamine biosynthesis; S-adenosylmethioninamine biosynthesis; S-adenosylmethioninamine from S-adenosyl-L-methionine: step 1/1. Its function is as follows. Catalyzes the decarboxylation of S-adenosylmethionine to S-adenosylmethioninamine (dcAdoMet), the propylamine donor required for the synthesis of the polyamines spermine and spermidine from the diamine putrescine. This Sulfurihydrogenibium sp. (strain YO3AOP1) protein is S-adenosylmethionine decarboxylase proenzyme.